A 116-amino-acid chain; its full sequence is Somatostatin (116 aa).

Residues 1–24 (MLSCRLQCALALLSIALAVGTVSA) form the signal peptide. The propeptide occupies 25–88 (APSDPRLRQF…QDEVRLELER (64 aa)). Residues 60 to 82 (PSQTENEALESEDLSRGAEQDEV) form a disordered region. Residues 72 to 82 (DLSRGAEQDEV) are compositionally biased toward basic and acidic residues. Cys105 and Cys116 are joined by a disulfide.

The protein belongs to the somatostatin family.

It localises to the secreted. In terms of biological role, somatostatin inhibits the release of somatotropin. In Gallus gallus (Chicken), this protein is Somatostatin (SST).